Here is a 328-residue protein sequence, read N- to C-terminus: Embigin (328 aa).

Positions methionine 1 to glycine 33 are cleaved as a signal peptide. The Extracellular portion of the chain corresponds to aspartate 34–proline 264. N-linked (GlcNAc...) asparagine glycosylation is found at asparagine 55, asparagine 62, asparagine 75, asparagine 100, asparagine 117, asparagine 189, asparagine 196, asparagine 214, and asparagine 219. Ig-like domains are found at residues glutamate 67 to lysine 160 and proline 159 to valine 254. 2 cysteine pairs are disulfide-bonded: cysteine 88-cysteine 144 and cysteine 180-cysteine 238. A helical transmembrane segment spans residues phenylalanine 265–tyrosine 285. The Cytoplasmic portion of the chain corresponds to threonine 286–glutamine 328. Positions lysine 289 to aspartate 309 are enriched in basic and acidic residues. The segment at lysine 289 to glutamine 328 is disordered. Serine 310 carries the post-translational modification Phosphoserine.

As to quaternary structure, interacts with SLC16A1, SLC16A6 and SLC16A7. N-glycosylated. Detected in prostate, mammary gland and erythrocytes (at protein level). Detected in testis, brain, prostate, heart, kidney, liver, mammary gland and lung.

The protein resides in the cell membrane. The protein localises to the synapse. Plays a role in the outgrowth of motoneurons and in the formation of neuromuscular junctions. Following muscle denervation, promotes nerve terminal sprouting and the formation of additional acetylcholine receptor clusters at synaptic sites without affecting terminal Schwann cell number or morphology. Delays the retraction of terminal sprouts following re-innervation of denervated endplates. Plays a role in targeting the monocarboxylate transporters SLC16A1, SLC16A6 and SLC16A7 to the cell membrane. The sequence is that of Embigin (Emb) from Rattus norvegicus (Rat).